Here is a 238-residue protein sequence, read N- to C-terminus: MTHVEVVATIAPQLSIEETLIQKINHRIDAIDVLELRIDQIENVTVDQVAEMITKLKVMQDSFKLLVTYRTKLQGGYGQFINDLYLNLISDLANINGIDMIDIEWQADIDIEKHQRIIKHLQQYNKEVVISHHNFESTPPLDELQFIFFKMQKFNPEYVKLAVMPHNKNDVLNLLQAMSTFSDTMDCKVVGISMSKLGLISRTAQGVFGGALTYGCIGEPQAPGQIDVTDLKAQVTLY.

3-dehydroquinate-binding positions include 35 to 37 (ELR) and arginine 70. Histidine 133 functions as the Proton donor/acceptor in the catalytic mechanism. Lysine 160 serves as the catalytic Schiff-base intermediate with substrate. 2 residues coordinate 3-dehydroquinate: arginine 202 and glutamine 225.

This sequence belongs to the type-I 3-dehydroquinase family. Homodimer.

The catalysed reaction is 3-dehydroquinate = 3-dehydroshikimate + H2O. It participates in metabolic intermediate biosynthesis; chorismate biosynthesis; chorismate from D-erythrose 4-phosphate and phosphoenolpyruvate: step 3/7. Involved in the third step of the chorismate pathway, which leads to the biosynthesis of aromatic amino acids. Catalyzes the cis-dehydration of 3-dehydroquinate (DHQ) and introduces the first double bond of the aromatic ring to yield 3-dehydroshikimate. The chain is 3-dehydroquinate dehydratase from Staphylococcus aureus (strain Mu3 / ATCC 700698).